The chain runs to 263 residues: Endonuclease 8 (263 aa).

The Schiff-base intermediate with DNA role is filled by P2. E3 acts as the Proton donor in catalysis. The active-site Proton donor; for beta-elimination activity is K53. Q70, R125, and N169 together coordinate DNA. The FPG-type zinc finger occupies 229–263 (KVFHRDGEPCERCGSIIEKTTLSSRPFYWCPGCQH). Residue R253 is the Proton donor; for delta-elimination activity of the active site.

This sequence belongs to the FPG family. The cofactor is Zn(2+).

The enzyme catalyses 2'-deoxyribonucleotide-(2'-deoxyribose 5'-phosphate)-2'-deoxyribonucleotide-DNA = a 3'-end 2'-deoxyribonucleotide-(2,3-dehydro-2,3-deoxyribose 5'-phosphate)-DNA + a 5'-end 5'-phospho-2'-deoxyribonucleoside-DNA + H(+). Its function is as follows. Involved in base excision repair of DNA damaged by oxidation or by mutagenic agents. Acts as a DNA glycosylase that recognizes and removes damaged bases. Has a preference for oxidized pyrimidines, such as thymine glycol, 5,6-dihydrouracil and 5,6-dihydrothymine. Has AP (apurinic/apyrimidinic) lyase activity and introduces nicks in the DNA strand. Cleaves the DNA backbone by beta-delta elimination to generate a single-strand break at the site of the removed base with both 3'- and 5'-phosphates. This Shigella sonnei (strain Ss046) protein is Endonuclease 8.